A 279-amino-acid polypeptide reads, in one-letter code: Estrogen receptor beta (279 aa).

The 235-residue stretch at S27 to H261 folds into the NR LBD domain.

It belongs to the nuclear hormone receptor family. NR3 subfamily. As to quaternary structure, binds DNA as a homodimer. Can form a heterodimer with ESR1. Interacts with NCOA1, NCOA3, NCOA5 and NCOA6 coactivators, leading to a strong increase of transcription of target genes. Interacts with UBE1C and AKAP13. Interacts with DNTTIP2. Interacts with CCDC62 in the presence of estradiol/E2; this interaction seems to enhance the transcription of target genes. Interacts with DNAAF4. Interacts with PRMT2. Interacts with CCAR2 (via N-terminus) in a ligand-independent manner. Interacts with RBM39, in the presence of estradiol (E2). Interacts with STUB1/CHIP.

The protein resides in the nucleus. In terms of biological role, nuclear hormone receptor. Binds estrogens with an affinity similar to that of ESR1/ER-alpha, and activates expression of reporter genes containing estrogen response elements (ERE) in an estrogen-dependent manner. This Macaca mulatta (Rhesus macaque) protein is Estrogen receptor beta (ESR2).